The primary structure comprises 1284 residues: ABC multidrug transporter atrC (1284 aa).

The span at 1–11 (MKSTAESKETP) shows a compositional bias: basic and acidic residues. Residues 1–24 (MKSTAESKETPSQDESTTSVPCTE) form a disordered region. Transmembrane regions (helical) follow at residues 55-75 (AVAILAACASGAGIALQNLIF), 99-119 (AAELALYFVYLGIARLVLSYT), 178-198 (IGLLFQGLAAFVTLSLSRLWC), 203-223 (TLICICIPVATIGTTGVVAAV), 282-302 (LLGLLFSAEYTIIYLGYGLAF), and 320-340 (IFTVLLSVVIASINLTLLAPY). The ABC transmembrane type-1 1 domain occupies 55 to 346 (AVAILAACAS…LAPYSIEFSR (292 aa)). Positions 381-626 (VELENVTFSY…DGVYAGLVKI (246 aa)) constitute an ABC transporter 1 domain. Asn-385 and Asn-401 each carry an N-linked (GlcNAc...) asparagine glycan. 416–423 (GQSGSGKS) lines the ATP pocket. Asn-488 and Asn-632 each carry an N-linked (GlcNAc...) asparagine glycan. 2 helical membrane-spanning segments follow: residues 705 to 725 (LVVLLGCLGGCAMYPGQAILM) and 745 to 765 (FYASMLIVLAAGCLICYLAVG). An ABC transmembrane type-1 2 domain is found at 705–992 (LVVLLGCLGG…LFQWSTSITK (288 aa)). Asn-800 carries an N-linked (GlcNAc...) asparagine glycan. Helical transmembrane passes span 824–844 (IALVVIAVLQVVTCGILAIAF), 846–866 (WKLGLVVVFGGIPPLVGAGMV), 931–951 (MICFGLTQCIEYWFQALGFWY), and 955–975 (LVSLGETSMYSFFVAFLSVFF). Asn-995 is a glycosylation site (N-linked (GlcNAc...) asparagine). In terms of domain architecture, ABC transporter 2 spans 1027-1280 (IAMDNVRFSY…GGLYRRMCEA (254 aa)). ATP is bound at residue 1062-1069 (GSSGCGKS). N-linked (GlcNAc...) asparagine glycosylation occurs at Asn-1122.

This sequence belongs to the ABC transporter superfamily. ABCB family. Multidrug resistance exporter (TC 3.A.1.201) subfamily.

Its subcellular location is the cell membrane. Its function is as follows. Pleiotropic ABC efflux transporter involved in the protection of the cells against a wide range of toxic compounds. The chain is ABC multidrug transporter atrC from Emericella nidulans (Aspergillus nidulans).